A 558-amino-acid chain; its full sequence is Urease subunit alpha 2 (558 aa).

The Urease domain maps to 129–558; the sequence is GAVDTHVHLL…SVSLNRLYFL (430 aa). 3 residues coordinate Ni(2+): His134, His136, and Lys214. Lys214 is modified (N6-carboxylysine). His216 contacts substrate. His243 and His269 together coordinate Ni(2+). His317 functions as the Proton donor in the catalytic mechanism. Ni(2+) is bound at residue Asp357.

It belongs to the metallo-dependent hydrolases superfamily. Urease alpha subunit family. In terms of assembly, may form a heterohexamer of 3 UreC (alpha) and 3 UreAB (gamma/beta) subunits. May also form a heterotrimer of UreA (gamma), UreB (beta) and UreC (alpha) subunits. Three heterotrimers associate to form the active enzyme. It depends on Ni cation as a cofactor. In terms of processing, carboxylation allows a single lysine to coordinate two nickel ions.

It is found in the cytoplasm. The enzyme catalyses urea + 2 H2O + H(+) = hydrogencarbonate + 2 NH4(+). The protein operates within nitrogen metabolism; urea degradation; CO(2) and NH(3) from urea (urease route): step 1/1. The chain is Urease subunit alpha 2 from Streptomyces coelicolor (strain ATCC BAA-471 / A3(2) / M145).